The chain runs to 395 residues: G-protein coupled receptor 182 (395 aa).

Residues 1 to 53 (MSVIPSPRPVSTLEPDNDFRDIHNWTELLHLFNQTFTDCHIEFNENTKHVVLF) lie on the Extracellular side of the membrane. Asn-24 and Asn-33 each carry an N-linked (GlcNAc...) asparagine glycan. A helical transmembrane segment spans residues 54–75 (VFYLAIFVVGLVENVLVICVNC). Residues 76–86 (RRSGRVGMLNL) are Cytoplasmic-facing. Residues 87-109 (YILNMAIADLGIILSLPVWMLEV) traverse the membrane as a helical segment. Topologically, residues 110–123 (MLEYTWLWGSFSCR) are extracellular. An intrachain disulfide couples Cys-122 to Cys-198. A helical transmembrane segment spans residues 124 to 145 (FIHYFYLVNMYSSIFFLTCLSI). The Cytoplasmic portion of the chain corresponds to 146-166 (DRYVTLTNTSPSWQRHQHRIR). A helical membrane pass occupies residues 167–189 (RAVCAGVWVLSAIIPLPEVVHIQ). Residues 190-213 (LLDGSEPMCLFLAPFETYSAWALA) lie on the Extracellular side of the membrane. The helical transmembrane segment at 214-235 (VALSATILGFLLPFLLIAVFNI) threads the bilayer. The Cytoplasmic portion of the chain corresponds to 236-254 (LTACRLRRQRQTESRRHCL). Residues 255–276 (LMWAYIVVFAICWLPYQVTMLL) traverse the membrane as a helical segment. Residues 277–295 (LTLHGTHIFLHCHLVNLLY) lie on the Extracellular side of the membrane. The helical transmembrane segment at 296-316 (FFYEIIDCFSMLHCVANPILY) threads the bilayer. Over 317 to 395 (NFLSPSFRGR…QTPHLHSAIL (79 aa)) the chain is Cytoplasmic. A Phosphoserine modification is found at Ser-329.

It belongs to the G-protein coupled receptor 1 family. As to expression, expressed in liver and lung.

It is found in the cell membrane. Functionally, orphan receptor. This Mus musculus (Mouse) protein is G-protein coupled receptor 182 (Gpr182).